The chain runs to 134 residues: Isocitrate dehydrogenase [NAD] subunit alpha, mitochondrial (134 aa).

Lys-37 carries the N6-succinyllysine modification. Thr-50 bears the Phosphothreonine mark. Arg-64, Arg-74, and Arg-95 together coordinate substrate.

It belongs to the isocitrate and isopropylmalate dehydrogenases family. Heterooligomer of subunits alpha (IDH3A), beta (IDH3B), and gamma (IDH3G) in the apparent ratio of 2:1:1. The heterodimer containing one IDH3A and one IDH3B subunit and the heterodimer containing one IDH3A and one IDH3G subunit assemble into a heterotetramer (which contains two subunits of IDH3A, one of IDH3B and one of IDH3G) and further into the heterooctamer. The cofactor is Mg(2+). Mn(2+) is required as a cofactor.

It localises to the mitochondrion. The catalysed reaction is D-threo-isocitrate + NAD(+) = 2-oxoglutarate + CO2 + NADH. The heterotetramer and the heterodimer composed of IDH3A and IDH3G subunits can be allosterically activated by citrate (CIT) or/and ADP, and the two activators can act independently or synergistically. The heterodimer composed of IDH3A and IDH3B subunits cannot be allosterically regulated and the allosteric regulation of the heterotetramer is through the IDH3G subunit and not the IDH3B subunit. The IDH3G subunit contains the allosteric site which consists of a CIT-binding site and an ADP-binding site, and the binding of CIT and ADP causes conformational changes at the allosteric site which are transmitted to the active site in the catalytic subunit (IDH3A) through a cascade of conformational changes at the heterodimer interface, leading to stabilization of the isocitrate-binding at the active site and thus activation of the enzyme. ATP can activate the heterotetramer and the heterodimer composed of IDH3A and IDH3G subunits at low concentrations but inhibits their activities at high concentrations, whereas ATP exhibits only inhibitory effect on the heterodimer composed of IDH3A and IDH3B subunits. Its function is as follows. Catalytic subunit of the enzyme which catalyzes the decarboxylation of isocitrate (ICT) into alpha-ketoglutarate. The heterodimer composed of the alpha (IDH3A) and beta (IDH3B) subunits and the heterodimer composed of the alpha (IDH3A) and gamma (IDH3G) subunits, have considerable basal activity but the full activity of the heterotetramer (containing two subunits of IDH3A, one of IDH3B and one of IDH3G) requires the assembly and cooperative function of both heterodimers. This Mesocricetus auratus (Golden hamster) protein is Isocitrate dehydrogenase [NAD] subunit alpha, mitochondrial.